Consider the following 496-residue polypeptide: MTSVQLETPHSGKYEQPTGLFINNEFVKGQEGKTFDVINPSDESVITQVHEATEKDVDIAVAAARKAFEGSWRQETPENRGKLLNNLANLFEKNIDLLAAVESLDNGKAISMAKGDISMCVGCLRYYGGWADKITGKVIDTTPDTFNYVKKEPIGVCGQIIPWNFPLLMWAWKIGPAIACGNTVVLKTAEQTPLGGLVAASLVKEAGFPPGVINVISGFGKVAGAALSSHMDVDKVAFTGSTVVGRTILKAAASSNLKKVTLELGGKSPNIVFEDADIDNAISWVNFGIFFNHGQCCCAGSRVYVQESIYDKFVQKFKERAQKNVVGDPFAADTFQGPQVSKVQFDRIMEYIQAGKDAGATVETGGKRKGDKGYFIEPTIFSNVTEDMKIVKEEIFGPVCSIAKFKTKEDAIKLGNASTYGLAAAVHTKNLNTAIEVSNALKAGTVWVNTYNTLHHQMPFGGYKESGIGRELGEDALANYTQTKTVSIRLGDALFG.

Active-site residues include Glu-263 and Cys-296.

The protein belongs to the aldehyde dehydrogenase family.

The protein localises to the cytoplasm. The enzyme catalyses an aldehyde + NAD(+) + H2O = a carboxylate + NADH + 2 H(+). This chain is Aldehyde dehydrogenase (CLAH10), found in Davidiella tassiana (Mycosphaerella tassiana).